Consider the following 370-residue polypeptide: Phosphoserine aminotransferase (370 aa).

An N-acetylmethionine modification is found at Met1. O-phospho-L-serine-binding residues include His44 and Arg45. Lys51 is modified (N6-acetyllysine). Pyridoxal 5'-phosphate is bound by residues Gly79 and Trp107. Lys127 bears the N6-acetyllysine mark. Residues Thr156, Asp176, and Gln199 each contribute to the pyridoxal 5'-phosphate site. At Lys200 the chain carries N6-(pyridoxal phosphate)lysine. Residues Asn241 and Thr242 each contribute to the pyridoxal 5'-phosphate site. Lys269, Lys318, and Lys323 each carry N6-acetyllysine. Ser331 carries the post-translational modification Phosphoserine. Lys333 is modified (N6-acetyllysine). O-phospho-L-serine contacts are provided by His335, Arg336, and Arg342.

It belongs to the class-V pyridoxal-phosphate-dependent aminotransferase family. SerC subfamily. In terms of assembly, homodimer. It depends on pyridoxal 5'-phosphate as a cofactor.

It carries out the reaction O-phospho-L-serine + 2-oxoglutarate = 3-phosphooxypyruvate + L-glutamate. It functions in the pathway amino-acid biosynthesis; L-serine biosynthesis; L-serine from 3-phospho-D-glycerate: step 2/3. Its function is as follows. Involved in L-serine biosynthesis via the phosphorylated pathway, a three-step pathway converting the glycolytic intermediate 3-phospho-D-glycerate into L-serine. Catalyzes the second step, that is the pyridoxal 5'-phosphate-dependent transamination of 3-phosphohydroxypyruvate and L-glutamate to O-phosphoserine (OPS) and alpha-ketoglutarate. The polypeptide is Phosphoserine aminotransferase (Mus musculus (Mouse)).